The following is a 279-amino-acid chain: Methyltransferase ausD (279 aa).

S-adenosyl-L-methionine is bound by residues 124-125 (DL), 152-153 (DI), and Arg244.

It belongs to the class I-like SAM-binding methyltransferase superfamily. Homodimer.

The protein operates within secondary metabolite biosynthesis; terpenoid biosynthesis. Methyltransferase; part of the gene cluster that mediates the biosynthesis of calidodehydroaustin, a fungal meroterpenoid. The first step of the pathway is the synthesis of 3,5-dimethylorsellinic acid by the polyketide synthase ausA. 3,5-dimethylorsellinic acid is then prenylated by the polyprenyl transferase ausN. Further epoxidation by the FAD-dependent monooxygenase ausM and cyclization by the probable terpene cyclase ausL lead to the formation of protoaustinoid A. Protoaustinoid A is then oxidized to spiro-lactone preaustinoid A3 by the combined action of the FAD-binding monooxygenases ausB and ausC, and the dioxygenase ausE. Acid-catalyzed keto-rearrangement and ring contraction of the tetraketide portion of preaustinoid A3 by ausJ lead to the formation of preaustinoid A4. The aldo-keto reductase ausK, with the help of ausH, is involved in the next step by transforming preaustinoid A4 into isoaustinone which is in turn hydroxylated by the P450 monooxygenase ausI to form austinolide. The cytochrome P450 monooxygenase ausG modifies austinolide to austinol. Austinol is further acetylated to austin by the O-acetyltransferase ausP, which spontaneously changes to dehydroaustin. The cytochrome P450 monooxygenase ausR then converts dehydroaustin is into 7-dehydrodehydroaustin. The hydroxylation catalyzed by ausR permits the O-acetyltransferase ausQ to add an additional acetyl group to the molecule, leading to the formation of acetoxydehydroaustin. The short chain dehydrogenase ausT catalyzes the reduction of the double bond present between carbon atoms 1 and 2 to convert 7-dehydrodehydroaustin into 1,2-dihydro-7-hydroxydehydroaustin. AusQ catalyzes not only an acetylation reaction but also the addition of the PKS ausV diketide product to 1,2-dihydro-7-hydroxydehydroaustin, forming precalidodehydroaustin. Finally, the iron/alpha-ketoglutarate-dependent dioxygenase converts precalidodehydroaustin into calidodehydroaustin. This Aspergillus calidoustus protein is Methyltransferase ausD.